The sequence spans 561 residues: Glucose-6-phosphate isomerase (561 aa).

Residues 171–172 (GS), 222–227 (SKTFTT), Q366, E370, H401, and K525 contribute to the D-glucose 6-phosphate site. E370 (proton donor) is an active-site residue. Residues H401 and K525 contribute to the active site.

This sequence belongs to the GPI family. In terms of assembly, homodimer.

The protein resides in the cytoplasm. It localises to the cytosol. The enzyme catalyses alpha-D-glucose 6-phosphate = beta-D-fructose 6-phosphate. Its pathway is carbohydrate degradation; glycolysis; D-glyceraldehyde 3-phosphate and glycerone phosphate from D-glucose: step 2/4. Its function is as follows. In the cytoplasm, catalyzes the conversion of glucose-6-phosphate to fructose-6-phosphate, the second step in glycolysis, and the reverse reaction during gluconeogenesis. In Neurospora crassa (strain ATCC 24698 / 74-OR23-1A / CBS 708.71 / DSM 1257 / FGSC 987), this protein is Glucose-6-phosphate isomerase (pgi-1).